A 540-amino-acid polypeptide reads, in one-letter code: Solute carrier family 2, facilitated glucose transporter member 9 (540 aa).

The interval 1 to 31 is disordered; sequence MARKQNRNSKELGLVPLTDDTSHAGPPGPGR. At 1–51 the chain is on the cytoplasmic side; it reads MARKQNRNSKELGLVPLTDDTSHAGPPGPGRALLECDHLRSGVPGGRRRKD. Ser-9 carries the post-translational modification Phosphoserine. A helical transmembrane segment spans residues 52–72; that stretch reads WSCSLLVASLAGAFGSSFLYG. The Extracellular segment spans residues 73-107; the sequence is YNLSVVNAPTPYIKAFYNESWERRHGRPIDPDTLT. N-linked (GlcNAc...) asparagine glycosylation occurs at Asn-90. A helical membrane pass occupies residues 108 to 128; it reads LLWSVTVSIFAIGGLVGTLIV. The Cytoplasmic portion of the chain corresponds to 129–140; sequence KMIGKVLGRKHT. The helical transmembrane segment at 141–161 threads the bilayer; it reads LLANNGFAISAALLMACSLQA. Residues 162–171 lie on the Extracellular side of the membrane; sequence GAFEMLIVGR. A helical membrane pass occupies residues 172-192; sequence FIMGIDGGVALSVLPMYLSEI. At 193–200 the chain is on the cytoplasmic side; it reads SPKEIRGS. A helical transmembrane segment spans residues 201 to 221; the sequence is LGQVTAIFICIGVFTGQLLGL. The Extracellular portion of the chain corresponds to 222–231; that stretch reads PELLGKESTW. A helical membrane pass occupies residues 232–252; sequence PYLFGVIVVPAVVQLLSLPFL. The Cytoplasmic segment spans residues 253 to 316; sequence PDSPRYLLLE…LLRAPYVRWQ (64 aa). Residues 317-337 form a helical membrane-spanning segment; sequence VVTVIVTMACYQLCGLNAIWF. Residues 338 to 354 are Extracellular-facing; that stretch reads YTNSIFGKAGIPPAKIP. The helical transmembrane segment at 355 to 375 threads the bilayer; it reads YVTLSTGGIETLAAVFSGLVI. Residues 376-381 lie on the Cytoplasmic side of the membrane; sequence EHLGRR. The chain crosses the membrane as a helical span at residues 382-402; sequence PLLIGGFGLMGLFFGTLTITL. Residues 403–415 are Extracellular-facing; the sequence is TLQDHAPWVPYLS. A helical membrane pass occupies residues 416–436; that stretch reads IVGILAIIASFCSGPGGIPFI. Topologically, residues 437 to 451 are cytoplasmic; that stretch reads LTGEFFQQSQRPAAF. Residues 452 to 472 form a helical membrane-spanning segment; the sequence is IIAGTVNWLSNFAVGLLFPFI. Residues 473–478 are Extracellular-facing; it reads QKSLDT. A helical membrane pass occupies residues 479 to 499; that stretch reads YCFLVFATICITGAIYLYFVL. At 500 to 540 the chain is on the cytoplasmic side; that stretch reads PETKNRTYAEISQAFSKRNKAYPPEEKIDSAVTDGKINGRP. Ser-515 is modified (phosphoserine). The interval 519 to 540 is disordered; sequence KAYPPEEKIDSAVTDGKINGRP.

It belongs to the major facilitator superfamily. Sugar transporter (TC 2.A.1.1) family. Glucose transporter subfamily. In terms of tissue distribution, most strongly expressed in basolateral membranes of proximal renal tubular cells, liver and placenta. Also detected in lung, blood leukocytes, heart skeletal muscle and chondrocytes from articular cartilage. Detected in kidney membrane (at protein level). Only detected in the apical membranes of polarized renal tubular cells and placenta. Detected in kidney membrane (at protein level).

It localises to the cell membrane. The protein resides in the basolateral cell membrane. Its subcellular location is the apical cell membrane. The enzyme catalyses urate(out) = urate(in). With respect to regulation, extracellular glucose and urate accelerate urate efflux. Intracellular urate, glucose and fructose accelerate urate influx. Its activity is regulated as follows. No effect of extracellular urate, glucose or fructose on urate efflux. Intracellular urate and fructose slightly accelerate urate influx. Its function is as follows. High-capacity urate transporter, which may play a role in the urate reabsorption by proximal tubules. May have a residual high-affinity, low-capacity glucose and fructose transporter activity. Transports urate at rates 45- to 60-fold faster than glucose. Does not transport galactose. May mediate small uptake of adenine but not of other nucleobases. The polypeptide is Solute carrier family 2, facilitated glucose transporter member 9 (Homo sapiens (Human)).